The following is a 586-amino-acid chain: Phosphomethylpyrimidine synthase (586 aa).

2 disordered regions span residues 38-59 and 92-114; these read IELSDTNGVPNSPIRVYDTSGP and GREIKPEDDGVKAASNHTPVFPQ. Basic and acidic residues predominate over residues 92–102; the sequence is GREIKPEDDGV. Substrate is bound by residues Asn-193, Met-222, Tyr-251, His-287, 307-309, 348-351, and Glu-387; these read SRG and DGLR. Zn(2+) is bound at residue His-391. Position 414 (Tyr-414) interacts with substrate. Residue His-455 participates in Zn(2+) binding. [4Fe-4S] cluster-binding residues include Cys-535, Cys-538, and Cys-543.

Belongs to the ThiC family. It depends on [4Fe-4S] cluster as a cofactor.

The enzyme catalyses 5-amino-1-(5-phospho-beta-D-ribosyl)imidazole + S-adenosyl-L-methionine = 4-amino-2-methyl-5-(phosphooxymethyl)pyrimidine + CO + 5'-deoxyadenosine + formate + L-methionine + 3 H(+). The protein operates within cofactor biosynthesis; thiamine diphosphate biosynthesis. Functionally, catalyzes the synthesis of the hydroxymethylpyrimidine phosphate (HMP-P) moiety of thiamine from aminoimidazole ribotide (AIR) in a radical S-adenosyl-L-methionine (SAM)-dependent reaction. This Bacillus cytotoxicus (strain DSM 22905 / CIP 110041 / 391-98 / NVH 391-98) protein is Phosphomethylpyrimidine synthase.